A 797-amino-acid polypeptide reads, in one-letter code: RAS guanyl-releasing protein 1 (797 aa).

Residues M1–R12 are compositionally biased toward basic and acidic residues. Residues M1–K23 form a disordered region. The 124-residue stretch at L53–A176 folds into the N-terminal Ras-GEF domain. Positions A57 to Y110 are ras exchanger motif region; required for transforming activity. Phosphothreonine; by PKC is present on T184. A Ras-GEF domain is found at E205–R436. 2 EF-hand domains span residues H470–S505 and F506–I532. The Ca(2+) site is built by D483, D485, D487, Y489, and E494. Residues P541 to C591 form a Phorbol-ester/DAG-type zinc finger. Residues T673 to S694 are disordered. Residues P686–S694 form a suppress the PT region-mediated translocation to plasma membrane region. The PT region; mediates the BCR-dependent translocation to plasma membrane stretch occupies residues L718–S797. Positions P746–H786 form a coiled coil.

It belongs to the RASGRP family. Homodimer. Forms a signaling complex with DGKZ and HRAS. Interacts with F-actin. Interacts with SKAP1. In terms of tissue distribution, expressed in brain with higher expression in cerebellum, cerebral cortex and amygdala. Expressed in the hematopoietic system. Expressed in T-cells (at protein level). Expressed in NK cells (at protein level).

Its subcellular location is the cytoplasm. The protein localises to the cytosol. It localises to the cell membrane. The protein resides in the golgi apparatus membrane. It is found in the endoplasmic reticulum membrane. Autoinhibited. Activated by diacylglycerol and calcium binding, which induces a conformational change releasing the autoinhibitory state. Regulated by DGKA. Regulated by DGKZ. Regulated by PLC gamma and F-actin polymerization. Functions as a calcium- and diacylglycerol (DAG)-regulated nucleotide exchange factor specifically activating Ras through the exchange of bound GDP for GTP. Activates the Erk/MAP kinase cascade. Regulates T-cell/B-cell development, homeostasis and differentiation by coupling T-lymphocyte/B-lymphocyte antigen receptors to Ras. Regulates NK cell cytotoxicity and ITAM-dependent cytokine production by activation of Ras-mediated ERK and JNK pathways. Functions in mast cell degranulation and cytokine secretion, regulating FcERI-evoked allergic responses. May also function in differentiation of other cell types. The chain is RAS guanyl-releasing protein 1 (RASGRP1) from Homo sapiens (Human).